We begin with the raw amino-acid sequence, 429 residues long: Histidine--tRNA ligase (429 aa).

Belongs to the class-II aminoacyl-tRNA synthetase family. As to quaternary structure, homodimer.

The protein localises to the cytoplasm. It catalyses the reaction tRNA(His) + L-histidine + ATP = L-histidyl-tRNA(His) + AMP + diphosphate + H(+). This Cyanothece sp. (strain PCC 7425 / ATCC 29141) protein is Histidine--tRNA ligase.